The following is a 188-amino-acid chain: Putative manganese efflux pump MntP (188 aa).

Transmembrane regions (helical) follow at residues 3–23 (ITATVLLAFGMSMDAFAASIG), 41–61 (LIFGAVETLTPLIGWGLGMLA), 66–86 (LEWNHWVAFILLVFLGIRMII), 107–129 (LLVTTAIATSLDAMAVGVGLAFL), 143–163 (ATLIMSTLGIMVGRFIGPLLG), and 168–188 (ILGGAVLIGIGAQILWTHFHG).

Belongs to the MntP (TC 9.B.29) family.

It is found in the cell inner membrane. Functionally, probably functions as a manganese efflux pump. This Citrobacter koseri (strain ATCC BAA-895 / CDC 4225-83 / SGSC4696) protein is Putative manganese efflux pump MntP.